We begin with the raw amino-acid sequence, 251 residues long: Hydroxyacylglutathione hydrolase (251 aa).

Residues His53, His55, Asp57, His58, His110, Asp127, and His165 each coordinate Zn(2+).

It belongs to the metallo-beta-lactamase superfamily. Glyoxalase II family. As to quaternary structure, monomer. Requires Zn(2+) as cofactor.

The enzyme catalyses an S-(2-hydroxyacyl)glutathione + H2O = a 2-hydroxy carboxylate + glutathione + H(+). It participates in secondary metabolite metabolism; methylglyoxal degradation; (R)-lactate from methylglyoxal: step 2/2. Thiolesterase that catalyzes the hydrolysis of S-D-lactoyl-glutathione to form glutathione and D-lactic acid. The polypeptide is Hydroxyacylglutathione hydrolase (Salmonella paratyphi A (strain ATCC 9150 / SARB42)).